Consider the following 345-residue polypeptide: Phosphoribosylformylglycinamidine cyclo-ligase (345 aa).

Belongs to the AIR synthase family.

The protein localises to the cytoplasm. It catalyses the reaction 2-formamido-N(1)-(5-O-phospho-beta-D-ribosyl)acetamidine + ATP = 5-amino-1-(5-phospho-beta-D-ribosyl)imidazole + ADP + phosphate + H(+). Its pathway is purine metabolism; IMP biosynthesis via de novo pathway; 5-amino-1-(5-phospho-D-ribosyl)imidazole from N(2)-formyl-N(1)-(5-phospho-D-ribosyl)glycinamide: step 2/2. This is Phosphoribosylformylglycinamidine cyclo-ligase from Shewanella amazonensis (strain ATCC BAA-1098 / SB2B).